A 63-amino-acid polypeptide reads, in one-letter code: Beta-glucosidase A-3 (63 aa).

D12 is an active-site residue. N48 and N56 each carry an N-linked (GlcNAc...) asparagine glycan.

This sequence belongs to the glycosyl hydrolase 3 family.

The catalysed reaction is Hydrolysis of terminal, non-reducing beta-D-glucosyl residues with release of beta-D-glucose.. It functions in the pathway glycan metabolism; cellulose degradation. In Aspergillus wentii, this protein is Beta-glucosidase A-3.